The primary structure comprises 122 residues: Small ribosomal subunit protein bS6 (122 aa).

The disordered stretch occupies residues 97-122 (TAPSPMMKAVQKEDAAKSHRAEAPAA). Over residues 106 to 122 (VQKEDAAKSHRAEAPAA) the composition is skewed to basic and acidic residues.

The protein belongs to the bacterial ribosomal protein bS6 family.

Binds together with bS18 to 16S ribosomal RNA. This Janthinobacterium sp. (strain Marseille) (Minibacterium massiliensis) protein is Small ribosomal subunit protein bS6.